We begin with the raw amino-acid sequence, 73 residues long: Large ribosomal subunit protein bL31 (73 aa).

Zn(2+) is bound by residues C16, C18, C37, and C40.

This sequence belongs to the bacterial ribosomal protein bL31 family. Type A subfamily. As to quaternary structure, part of the 50S ribosomal subunit. Zn(2+) is required as a cofactor.

In terms of biological role, binds the 23S rRNA. The sequence is that of Large ribosomal subunit protein bL31 from Blochmanniella floridana.